Consider the following 957-residue polypeptide: Valine--tRNA ligase (957 aa).

The short motif at 42-52 is the 'HIGH' region element; sequence PNVTGSLHMGH. The 'KMSKS' region motif lies at 554–558; that stretch reads KMSKS. Residue lysine 557 coordinates ATP. Positions 890-956 form a coiled coil; the sequence is DKDAELARLA…LEAQQETIAA (67 aa).

Belongs to the class-I aminoacyl-tRNA synthetase family. ValS type 1 subfamily. As to quaternary structure, monomer.

The protein localises to the cytoplasm. The enzyme catalyses tRNA(Val) + L-valine + ATP = L-valyl-tRNA(Val) + AMP + diphosphate. Catalyzes the attachment of valine to tRNA(Val). As ValRS can inadvertently accommodate and process structurally similar amino acids such as threonine, to avoid such errors, it has a 'posttransfer' editing activity that hydrolyzes mischarged Thr-tRNA(Val) in a tRNA-dependent manner. The sequence is that of Valine--tRNA ligase from Aliivibrio fischeri (strain ATCC 700601 / ES114) (Vibrio fischeri).